The chain runs to 637 residues: Sodium-dependent phosphate transport protein 2A (637 aa).

The Cytoplasmic portion of the chain corresponds to 1–103 (MMSYSERLGG…LAQVGTKLLK (103 aa)). Residues S14 and S34 each carry the phosphoserine modification. Residues 104-125 (VPLMLGFLYLFVCSLDVLSSAF) traverse the membrane as a helical segment. Topologically, residues 126–145 (QLAGGKVAGDIFKDNAILSN) are extracellular. Residues 146 to 163 (PVAGLVVGILVTVLVQSS) form a helical membrane-spanning segment. The Cytoplasmic portion of the chain corresponds to 164–216 (STSTSIIVSMVSSGLLEVSSAIPIIMGSNIGTSVTNTIVALMQAGDRTDFRRA). Residues 217-236 (FAGATVHDCFNWLSVLVLLP) form a helical membrane-spanning segment. 2 disulfide bridges follow: C225-C520 and C306-C334. At 237 to 345 (LEAATGYLHH…HIFVDTGLPD (109 aa)) the chain is on the extracellular side. 2 N-linked (GlcNAc...) asparagine glycosylation sites follow: N298 and N328. A helical membrane pass occupies residues 346 to 368 (LAVGLILLAGSLVVLCTCLILLV). Over 369 to 410 (KMLNSLLKGQVANVIQKVINTDFPAPFTWVTGYFAMVVGASM) the chain is Cytoplasmic. Residues 411 to 434 (TFVVQSSSVFTSAITPLIGLGVIS) traverse the membrane as a helical segment. Residues 435 to 464 (IERAYPLTLGSNIGTTTTAILAALASPREK) are Extracellular-facing. Residues 465–485 (LSSSFQIALCHFFFNISGILL) form a helical membrane-spanning segment. Residues 486-511 (WYPLPCTRLPIRMAKALGKRTAKYRW) are Cytoplasmic-facing. T506 is modified (phosphothreonine; by PKC). A helical transmembrane segment spans residues 512–532 (FAVLYLLVCFLLLPSLVFGIS). Residues 533–537 (MAGWQ) are Extracellular-facing. A helical membrane pass occupies residues 538–559 (AMVGVGTPFGALLAFVVLVNVL). Residues 560-637 (QSRSPGHLPK…LPAHHNATRL (78 aa)) lie on the Cytoplasmic side of the membrane. Position 605 is a phosphoserine (S605). T621 carries the phosphothreonine modification. S623 is modified (phosphoserine).

This sequence belongs to the SLC34A transporter family. As to quaternary structure, interacts via its C-terminal region with NHERF4. Interacts with NHERF1. Interacts with TMEM174; regulates SLC34A1 internalization by PTH and FGF23. In terms of tissue distribution, kidney.

Its subcellular location is the apical cell membrane. It is found in the cell membrane. It carries out the reaction 3 Na(+)(out) + phosphate(out) = 3 Na(+)(in) + phosphate(in). Transport activity is significantly increased in response to dietary phosphate deprivation. Functionally, involved in actively transporting phosphate into cells via Na(+) cotransport in the renal brush border membrane. The cotransport has a Na(+):Pi stoichiometry of 3:1 and is electrogenic. In Rattus norvegicus (Rat), this protein is Sodium-dependent phosphate transport protein 2A.